We begin with the raw amino-acid sequence, 111 residues long: Nucleoid-associated protein Cag_1190 (111 aa).

Belongs to the YbaB/EbfC family. As to quaternary structure, homodimer.

It localises to the cytoplasm. The protein localises to the nucleoid. Its function is as follows. Binds to DNA and alters its conformation. May be involved in regulation of gene expression, nucleoid organization and DNA protection. The polypeptide is Nucleoid-associated protein Cag_1190 (Chlorobium chlorochromatii (strain CaD3)).